We begin with the raw amino-acid sequence, 429 residues long: Adenylosuccinate synthetase (429 aa).

Residues 12-18 (GDEGKGK) and 40-42 (GHT) each bind GTP. D13 (proton acceptor) is an active-site residue. Mg(2+)-binding residues include D13 and G40. Residues 13-16 (DEGK), 38-41 (NAGH), T128, R142, Q223, T238, and R302 contribute to the IMP site. H41 acts as the Proton donor in catalysis. Position 298-304 (298-304 (VNTGRKR)) interacts with substrate. GTP contacts are provided by residues R304, 330–332 (KLD), and 412–414 (GVG).

This sequence belongs to the adenylosuccinate synthetase family. In terms of assembly, homodimer. Requires Mg(2+) as cofactor.

The protein resides in the cytoplasm. The enzyme catalyses IMP + L-aspartate + GTP = N(6)-(1,2-dicarboxyethyl)-AMP + GDP + phosphate + 2 H(+). It functions in the pathway purine metabolism; AMP biosynthesis via de novo pathway; AMP from IMP: step 1/2. Its function is as follows. Plays an important role in the de novo pathway of purine nucleotide biosynthesis. Catalyzes the first committed step in the biosynthesis of AMP from IMP. The polypeptide is Adenylosuccinate synthetase (Corynebacterium glutamicum (strain R)).